The sequence spans 871 residues: DNA mismatch repair protein MutS (871 aa).

Residue 616-623 (GPNMAGKS) participates in ATP binding. The disordered stretch occupies residues 801-825 (ETEKTEESMEGTNLPKKKKEEKTSS).

The protein belongs to the DNA mismatch repair MutS family.

In terms of biological role, this protein is involved in the repair of mismatches in DNA. It is possible that it carries out the mismatch recognition step. This protein has a weak ATPase activity. The polypeptide is DNA mismatch repair protein MutS (Clostridium kluyveri (strain NBRC 12016)).